The primary structure comprises 242 residues: Probable ABC transporter ATP-binding protein PEB1C (242 aa).

The region spanning 2–236 (IELKNVNKYY…PKTERARLFL (235 aa)) is the ABC transporter domain. ATP is bound at residue 34 to 41 (GPSGSGKS).

Belongs to the ABC transporter superfamily.

It is found in the cell inner membrane. Its function is as follows. Most probably involved, with PEB1, in a binding-protein-dependent transport system for an amino acid. Probably responsible for energy coupling to the transport system. This is Probable ABC transporter ATP-binding protein PEB1C (peb1C) from Campylobacter jejuni subsp. jejuni serotype O:2 (strain ATCC 700819 / NCTC 11168).